The following is a 709-amino-acid chain: MTATHRGAQADASAPAGPLPPEAAAKRVAWLRDELDRHNYQYYVLDAPTIPDAEYDALFSELQALELEHPELQTPDSPTQRVGGEPLSAFDSVRHRVPMLSLNNGFADDDVLNFDRRCAQGLGRTAPAAGEQDLFSAADAVEYACELKFDGLAMSLRYEDGRLVQAATRGDGETGEDVTVNVRTIKAIPLKLRGQAPAVLEVRGEVFMYRGDFDKLNERQAEAGEKTFVNPRNAAAGSLRQLDPRITAKRPLSFFAYGLGELQGVDRPPTHSAMLDGFAALGLPVCKDRAVVKGAQGLLDFYRDIGQRRDALPYDIDGVVYKVNALAEQERLGFVSRAPRFALAHKFPAQEMTTIVEDIEVQVGRTGAITPVARLKPVFVGGVTVTNATLHNEDEIRRKDVHIGDTVIVRRAGDVIPEVVAVVTERRPDDARAFVMPTACPVCGSHIEKLEDEAIARCTGGLICAAQRKQALLHFAQRRAMDIEGLGDKLVEQLVDQGIVRTPADLFKLGVAKLAALERMADKSAANLVAAIDASRETTMNRFIFALGIRHVGEATAKDLARHFGKLDALMAADEAALLEVNDVGPVVAQSIAHFFAEPHNVEVIEQLRAAGVHWTESEPVAKAPAPLSGKTFVLTGTLPTMSREDAKELLEAAGAKVAGSVSKKTDYVVAGAEAGSKLDKAEALGVPVLDEAGMLALLAEAGAAPAQE.

Positions 1–20 (MTATHRGAQADASAPAGPLP) are disordered. Residues 52 to 56 (DAEYD), 101 to 102 (SL), and E146 contribute to the NAD(+) site. The N6-AMP-lysine intermediate role is filled by K148. Residues R169, E205, K322, and K346 each contribute to the NAD(+) site. C440, C443, C458, and C464 together coordinate Zn(2+). The BRCT domain maps to 623-709 (KAPAPLSGKT…AEAGAAPAQE (87 aa)).

Belongs to the NAD-dependent DNA ligase family. LigA subfamily. It depends on Mg(2+) as a cofactor. Mn(2+) is required as a cofactor.

The catalysed reaction is NAD(+) + (deoxyribonucleotide)n-3'-hydroxyl + 5'-phospho-(deoxyribonucleotide)m = (deoxyribonucleotide)n+m + AMP + beta-nicotinamide D-nucleotide.. Its function is as follows. DNA ligase that catalyzes the formation of phosphodiester linkages between 5'-phosphoryl and 3'-hydroxyl groups in double-stranded DNA using NAD as a coenzyme and as the energy source for the reaction. It is essential for DNA replication and repair of damaged DNA. The protein is DNA ligase of Cupriavidus necator (strain ATCC 17699 / DSM 428 / KCTC 22496 / NCIMB 10442 / H16 / Stanier 337) (Ralstonia eutropha).